Here is a 211-residue protein sequence, read N- to C-terminus: MGVTCVTQVPVLEGKSVQQTVELLSKKLELLGAEKHGAFGVDCETYHTAAAISSQGQTGKLMYVMHNSEYPLSCFALFENGPCLIADANFDTLMVKLKGFFQNAKANKIESRGTRYQYCDFLVKVGTVTMGPSARGISVEVEYCPCVIANDCWNLLMEFMQSFMGSHTPGIPSVFGTKHDSIYSPADTMVQYMELFNKIRKQQQVPVAGIR.

Belongs to the Mediator complex subunit 20 family. As to quaternary structure, component of the Mediator complex.

The protein localises to the nucleus. Its function is as follows. Component of the Mediator complex, a coactivator involved in the regulated transcription of nearly all RNA polymerase II-dependent genes. Mediator functions as a bridge to convey information from gene-specific regulatory proteins to the basal RNA polymerase II transcription machinery. Mediator is recruited to promoters by direct interactions with regulatory proteins and serves as a scaffold for the assembly of a functional preinitiation complex with RNA polymerase II and the general transcription factors. The protein is Mediator of RNA polymerase II transcription subunit 20 (MED20) of Gallus gallus (Chicken).